We begin with the raw amino-acid sequence, 522 residues long: ATP synthase subunit alpha 2 (522 aa).

ATP is bound at residue 176–183 (GDRQTGKT).

The protein belongs to the ATPase alpha/beta chains family. In terms of assembly, F-type ATPases have 2 components, CF(1) - the catalytic core - and CF(0) - the membrane proton channel. CF(1) has five subunits: alpha(3), beta(3), gamma(1), delta(1), epsilon(1). CF(0) has three main subunits: a(1), b(2) and c(9-12). The alpha and beta chains form an alternating ring which encloses part of the gamma chain. CF(1) is attached to CF(0) by a central stalk formed by the gamma and epsilon chains, while a peripheral stalk is formed by the delta and b chains.

Its subcellular location is the cell inner membrane. It carries out the reaction ATP + H2O + 4 H(+)(in) = ADP + phosphate + 5 H(+)(out). Functionally, produces ATP from ADP in the presence of a proton gradient across the membrane. The alpha chain is a regulatory subunit. This chain is ATP synthase subunit alpha 2, found in Syntrophotalea carbinolica (strain DSM 2380 / NBRC 103641 / GraBd1) (Pelobacter carbinolicus).